We begin with the raw amino-acid sequence, 379 residues long: Glucose-1-phosphate adenylyltransferase (379 aa).

Residues Tyr99, Gly164, Glu179–Lys180, and Ser190 contribute to the alpha-D-glucose 1-phosphate site.

This sequence belongs to the bacterial/plant glucose-1-phosphate adenylyltransferase family. In terms of assembly, homotetramer.

It carries out the reaction alpha-D-glucose 1-phosphate + ATP + H(+) = ADP-alpha-D-glucose + diphosphate. It functions in the pathway glycan biosynthesis; glycogen biosynthesis. Involved in the biosynthesis of ADP-glucose, a building block required for the elongation reactions to produce glycogen. Catalyzes the reaction between ATP and alpha-D-glucose 1-phosphate (G1P) to produce pyrophosphate and ADP-Glc. This chain is Glucose-1-phosphate adenylyltransferase, found in Bacillus licheniformis (strain ATCC 14580 / DSM 13 / JCM 2505 / CCUG 7422 / NBRC 12200 / NCIMB 9375 / NCTC 10341 / NRRL NRS-1264 / Gibson 46).